The primary structure comprises 446 residues: Nuclear envelope integral membrane protein 1 (446 aa).

The signal sequence occupies residues Met-1–Gly-37. Residues Asn-62, Asn-118, and Asn-129 are each glycosylated (N-linked (GlcNAc...) asparagine). Helical transmembrane passes span Ile-154 to Ser-174, Tyr-181 to Tyr-201, Pro-209 to Phe-229, His-239 to Tyr-259, and Ser-269 to Ile-289. Residues Leu-410 to Ile-431 show a composition bias toward acidic residues. The tract at residues Leu-410 to Lys-446 is disordered. Residue Asn-441 is glycosylated (N-linked (GlcNAc...) asparagine).

The protein belongs to the NEMP family.

It is found in the nucleus inner membrane. Its function is as follows. Contributes to nuclear envelope stiffness in germ cells. Involved in male and female fertility. Essential for normal erythropoiesis. Required for efficient nuclear envelope opening and enucleation during the late stages of erythroblast maturation. This Danio rerio (Zebrafish) protein is Nuclear envelope integral membrane protein 1.